The chain runs to 711 residues: Probable cadmium-transporting ATPase (711 aa).

One can recognise an HMA domain in the interval 3 to 66 (EKTVYRVDGL…AGAFEHLKII (64 aa)). Positions 14 and 17 each coordinate Cd(2+). A run of 5 helical transmembrane segments spans residues 89-109 (WRLL…IMNG), 111-131 (DFYL…YSLF), 151-171 (IAII…VVIL), 317-337 (TPAI…LFGG), and 347-367 (LSVL…VAIV). D398 acts as the 4-aspartylphosphate intermediate in catalysis. The helical transmembrane segment at 669-689 (VIKLIALLLVIPGWLTLWIAI) threads the bilayer.

This sequence belongs to the cation transport ATPase (P-type) (TC 3.A.3) family. Type IB subfamily.

The protein localises to the cell membrane. The catalysed reaction is Cd(2+)(in) + ATP + H2O = Cd(2+)(out) + ADP + phosphate + H(+). Functionally, couples the hydrolysis of ATP with the export of cadmium. This chain is Probable cadmium-transporting ATPase (cadA), found in Listeria monocytogenes.